Here is a 162-residue protein sequence, read N- to C-terminus: Ubiquitin-fold modifier-conjugating enzyme 1 (162 aa).

C115 serves as the catalytic Glycyl thioester intermediate.

This sequence belongs to the ubiquitin-conjugating enzyme family. UFC1 subfamily. As to quaternary structure, interacts with uba-5.

In terms of biological role, E2-like enzyme which forms an intermediate with ufm-1. The intermediate is formed via a thioester linkage. The protein is Ubiquitin-fold modifier-conjugating enzyme 1 of Caenorhabditis briggsae.